The following is a 291-amino-acid chain: Serine hydrolase BPHL (291 aa).

The N-terminal stretch at 1-37 (MVAVLGGRGVLRLRLLLSALKPGIHVPRAGPAAAFGT) is a signal peptide. The 120-residue stretch at 62–181 (AVLLLPGMLG…DSMIYEGIRD (120 aa)) folds into the AB hydrolase-1 domain. N6-acetyllysine is present on residues K86 and K119. The residue at position 126 (K126) is an N6-acetyllysine; alternate. Residue K126 is modified to N6-succinyllysine; alternate. S139 serves as the catalytic Nucleophile. K184 is subject to N6-succinyllysine. K191 is subject to N6-acetyllysine; alternate. Residue K191 is modified to N6-succinyllysine; alternate. An N6-acetyllysine modification is found at K217. Position 221 (D221) interacts with Mg(2+). K243 is modified (N6-acetyllysine). The active-site Charge relay system is D244. An N6-acetyllysine; alternate mark is found at K260 and K271. 2 positions are modified to N6-succinyllysine; alternate: K260 and K271. The Charge relay system role is filled by H272.

This sequence belongs to the AB hydrolase superfamily. Lipase family. Monomer. May also form homodimers. In terms of tissue distribution, expressed at high levels in liver and kidney and lower levels in heart, intestine and skeletal muscle.

It is found in the mitochondrion. The enzyme catalyses L-homocysteine thiolactone + H2O = L-homocysteine + H(+). It carries out the reaction valacyclovir + H2O = acyclovir + L-valine + H(+). In terms of biological role, specific alpha-amino acid ester serine hydrolase that prefers small, hydrophobic, and aromatic side chains and does not have a stringent requirement for the leaving group other than preferring a primary alcohol. Has homocysteine-thiolactonase activity (in vitro) and may play a significant role in the detoxification of homocysteine thiolactone in vivo. Catalyzes the hydrolytic activation of amino acid ester prodrugs of nucleoside analogs such as valacyclovir and valganciclovir, converting them into their active forms (acyclovir and ganciclovir). The protein is Serine hydrolase BPHL (BPHL) of Homo sapiens (Human).